The sequence spans 184 residues: Oligoribonuclease (184 aa).

The 162-residue stretch at 8 to 169 (LIWIDLEMTG…EDIHESIIEL (162 aa)) folds into the Exonuclease domain. Tyr-129 is an active-site residue.

This sequence belongs to the oligoribonuclease family.

The protein resides in the cytoplasm. In terms of biological role, 3'-to-5' exoribonuclease specific for small oligoribonucleotides. The sequence is that of Oligoribonuclease from Buchnera aphidicola subsp. Schizaphis graminum (strain Sg).